A 458-amino-acid polypeptide reads, in one-letter code: Probable plasmid replicative DNA helicase (458 aa).

The SF4 helicase domain occupies 194 to 458 (KIDYVDGLPT…GKFTIQKEAW (265 aa)). An ATP-binding site is contributed by 225-232 (ARPAMGKT).

It belongs to the helicase family. DnaB subfamily. Homohexamer.

The enzyme catalyses Couples ATP hydrolysis with the unwinding of duplex DNA at the replication fork by translocating in the 5'-3' direction. This creates two antiparallel DNA single strands (ssDNA). The leading ssDNA polymer is the template for DNA polymerase III holoenzyme which synthesizes a continuous strand.. The catalysed reaction is ATP + H2O = ADP + phosphate + H(+). Functionally, a replicative DNA helicase, it participates in initiation and elongation during DNA replication. Travels ahead of the DNA replisome, separating dsDNA into templates for DNA synthesis. A processive ATP-dependent 5'-3' DNA helicase it has DNA-dependent ATPase activity. This Chlamydia psittaci (Chlamydophila psittaci) protein is Probable plasmid replicative DNA helicase.